The sequence spans 255 residues: 4-hydroxy-tetrahydrodipicolinate reductase (255 aa).

NAD(+) contacts are provided by residues glycine 9–methionine 14, aspartate 35, glycine 89–threonine 91, and alanine 115–phenylalanine 118. Histidine 145 (proton donor/acceptor) is an active-site residue. Histidine 146 is a binding site for (S)-2,3,4,5-tetrahydrodipicolinate. Lysine 149 serves as the catalytic Proton donor. Glycine 155–threonine 156 provides a ligand contact to (S)-2,3,4,5-tetrahydrodipicolinate.

This sequence belongs to the DapB family.

It localises to the cytoplasm. It catalyses the reaction (S)-2,3,4,5-tetrahydrodipicolinate + NAD(+) + H2O = (2S,4S)-4-hydroxy-2,3,4,5-tetrahydrodipicolinate + NADH + H(+). The catalysed reaction is (S)-2,3,4,5-tetrahydrodipicolinate + NADP(+) + H2O = (2S,4S)-4-hydroxy-2,3,4,5-tetrahydrodipicolinate + NADPH + H(+). Its pathway is amino-acid biosynthesis; L-lysine biosynthesis via DAP pathway; (S)-tetrahydrodipicolinate from L-aspartate: step 4/4. In terms of biological role, catalyzes the conversion of 4-hydroxy-tetrahydrodipicolinate (HTPA) to tetrahydrodipicolinate. This is 4-hydroxy-tetrahydrodipicolinate reductase from Streptococcus pneumoniae serotype 19F (strain G54).